Reading from the N-terminus, the 417-residue chain is Serine hydroxymethyltransferase (417 aa).

(6S)-5,6,7,8-tetrahydrofolate is bound by residues leucine 121 and 125-127 (GHL). Lysine 229 carries the post-translational modification N6-(pyridoxal phosphate)lysine. 355–357 (SPF) is a binding site for (6S)-5,6,7,8-tetrahydrofolate.

It belongs to the SHMT family. As to quaternary structure, homodimer. Requires pyridoxal 5'-phosphate as cofactor.

It localises to the cytoplasm. It catalyses the reaction (6R)-5,10-methylene-5,6,7,8-tetrahydrofolate + glycine + H2O = (6S)-5,6,7,8-tetrahydrofolate + L-serine. Its pathway is one-carbon metabolism; tetrahydrofolate interconversion. The protein operates within amino-acid biosynthesis; glycine biosynthesis; glycine from L-serine: step 1/1. Catalyzes the reversible interconversion of serine and glycine with tetrahydrofolate (THF) serving as the one-carbon carrier. This reaction serves as the major source of one-carbon groups required for the biosynthesis of purines, thymidylate, methionine, and other important biomolecules. Also exhibits THF-independent aldolase activity toward beta-hydroxyamino acids, producing glycine and aldehydes, via a retro-aldol mechanism. The protein is Serine hydroxymethyltransferase of Photorhabdus laumondii subsp. laumondii (strain DSM 15139 / CIP 105565 / TT01) (Photorhabdus luminescens subsp. laumondii).